The following is a 224-amino-acid chain: UPF0758 protein mma_2551 (224 aa).

An MPN domain is found at Ser-102 to Leu-224. 3 residues coordinate Zn(2+): His-173, His-175, and Asp-186. The JAMM motif motif lies at His-173–Asp-186.

This sequence belongs to the UPF0758 family.

The sequence is that of UPF0758 protein mma_2551 from Janthinobacterium sp. (strain Marseille) (Minibacterium massiliensis).